The chain runs to 143 residues: FAD synthase (143 aa).

Residues 10–11, 15–18, and D93 each bind ATP; these read TF and HPGH.

This sequence belongs to the archaeal FAD synthase family. In terms of assembly, homodimer. A divalent metal cation serves as cofactor.

It catalyses the reaction FMN + ATP + H(+) = FAD + diphosphate. Its pathway is cofactor biosynthesis; FAD biosynthesis; FAD from FMN: step 1/1. Its function is as follows. Catalyzes the transfer of the AMP portion of ATP to flavin mononucleotide (FMN) to produce flavin adenine dinucleotide (FAD) coenzyme. In Haloterrigena turkmenica (strain ATCC 51198 / DSM 5511 / JCM 9101 / NCIMB 13204 / VKM B-1734 / 4k) (Halococcus turkmenicus), this protein is FAD synthase.